We begin with the raw amino-acid sequence, 425 residues long: Serine--tRNA ligase (425 aa).

231 to 233 (TAE) contributes to the L-serine binding site. 262–264 (RSE) serves as a coordination point for ATP. An L-serine-binding site is contributed by Glu-285. An ATP-binding site is contributed by 349–352 (EISS). Ser-385 lines the L-serine pocket.

This sequence belongs to the class-II aminoacyl-tRNA synthetase family. Type-1 seryl-tRNA synthetase subfamily. Homodimer. The tRNA molecule binds across the dimer.

The protein resides in the cytoplasm. The enzyme catalyses tRNA(Ser) + L-serine + ATP = L-seryl-tRNA(Ser) + AMP + diphosphate + H(+). It catalyses the reaction tRNA(Sec) + L-serine + ATP = L-seryl-tRNA(Sec) + AMP + diphosphate + H(+). It participates in aminoacyl-tRNA biosynthesis; selenocysteinyl-tRNA(Sec) biosynthesis; L-seryl-tRNA(Sec) from L-serine and tRNA(Sec): step 1/1. Catalyzes the attachment of serine to tRNA(Ser). Is also able to aminoacylate tRNA(Sec) with serine, to form the misacylated tRNA L-seryl-tRNA(Sec), which will be further converted into selenocysteinyl-tRNA(Sec). The sequence is that of Serine--tRNA ligase from Bacillus velezensis (strain DSM 23117 / BGSC 10A6 / LMG 26770 / FZB42) (Bacillus amyloliquefaciens subsp. plantarum).